The following is a 223-amino-acid chain: Uracil-DNA glycosylase (223 aa).

Asp67 (proton acceptor) is an active-site residue.

This sequence belongs to the uracil-DNA glycosylase (UDG) superfamily. UNG family.

The protein resides in the cytoplasm. It carries out the reaction Hydrolyzes single-stranded DNA or mismatched double-stranded DNA and polynucleotides, releasing free uracil.. Its function is as follows. Excises uracil residues from the DNA which can arise as a result of misincorporation of dUMP residues by DNA polymerase or due to deamination of cytosine. This chain is Uracil-DNA glycosylase, found in Borrelia turicatae (strain 91E135).